The primary structure comprises 298 residues: N-acetylmuramic acid 6-phosphate etherase (298 aa).

Residues 55–218 (ASKRYREGGR…STGVMIKQGK (164 aa)) form the SIS domain. Glutamate 83 serves as the catalytic Proton donor. The active site involves glutamate 114.

This sequence belongs to the GCKR-like family. MurNAc-6-P etherase subfamily. As to quaternary structure, homodimer.

The enzyme catalyses N-acetyl-D-muramate 6-phosphate + H2O = N-acetyl-D-glucosamine 6-phosphate + (R)-lactate. It functions in the pathway amino-sugar metabolism; N-acetylmuramate degradation. In terms of biological role, specifically catalyzes the cleavage of the D-lactyl ether substituent of MurNAc 6-phosphate, producing GlcNAc 6-phosphate and D-lactate. This chain is N-acetylmuramic acid 6-phosphate etherase, found in Lactobacillus johnsonii (strain CNCM I-12250 / La1 / NCC 533).